The following is a 429-amino-acid chain: Ribosomal RNA small subunit methyltransferase B (429 aa).

Residues 254–260 (CAAPGGK), D277, D303, and D322 each bind S-adenosyl-L-methionine. C375 functions as the Nucleophile in the catalytic mechanism. Residues 397 to 419 (ALSETGTPDQPGQQNLPGGEEGD) form a disordered region. A compositionally biased stretch (polar residues) spans 400–412 (ETGTPDQPGQQNL).

The protein belongs to the class I-like SAM-binding methyltransferase superfamily. RsmB/NOP family.

The protein localises to the cytoplasm. The enzyme catalyses cytidine(967) in 16S rRNA + S-adenosyl-L-methionine = 5-methylcytidine(967) in 16S rRNA + S-adenosyl-L-homocysteine + H(+). Its function is as follows. Specifically methylates the cytosine at position 967 (m5C967) of 16S rRNA. In Salmonella heidelberg (strain SL476), this protein is Ribosomal RNA small subunit methyltransferase B.